Here is a 61-residue protein sequence, read N- to C-terminus: Temporin-MT3 (61 aa).

The first 22 residues, 1–22, serve as a signal peptide directing secretion; the sequence is MFTLKKPLLLLFFLGTINLSLC. A propeptide spans 23–44 (removed in mature form); that stretch reads EQERNAEEERRDEPDERNAEVE. Leucine amide is present on leucine 59.

It belongs to the frog skin active peptide (FSAP) family. Temporin subfamily. In terms of tissue distribution, expressed by the skin glands.

It is found in the secreted. Its function is as follows. Antimicrobial peptide. In Amolops mantzorum (Sichuan torrent frog), this protein is Temporin-MT3.